A 265-amino-acid chain; its full sequence is Mlc titration factor A (265 aa).

Histidine 111, histidine 148, histidine 152, and glutamate 211 together coordinate Zn(2+).

The protein belongs to the MtfA family. Interacts with Mlc. Requires Zn(2+) as cofactor.

Its subcellular location is the cytoplasm. Functionally, involved in the modulation of the activity of the glucose-phosphotransferase system (glucose-PTS). Interacts with the transcriptional repressor Mlc, preventing its interaction with DNA and leading to the modulation of expression of genes regulated by Mlc, including ptsG, which encodes the PTS system glucose-specific EIICB component. Shows zinc-dependent metallopeptidase activity. The protein is Mlc titration factor A of Escherichia coli (strain SMS-3-5 / SECEC).